The sequence spans 106 residues: ATP-dependent Clp protease adapter protein ClpS (106 aa).

The protein belongs to the ClpS family. As to quaternary structure, binds to the N-terminal domain of the chaperone ClpA.

In terms of biological role, involved in the modulation of the specificity of the ClpAP-mediated ATP-dependent protein degradation. The polypeptide is ATP-dependent Clp protease adapter protein ClpS (Photobacterium profundum (strain SS9)).